A 285-amino-acid chain; its full sequence is uncharacterized protein (285 aa).

The next 6 helical transmembrane spans lie at 7-29 (FYRL…LTLQ), 49-71 (LVVW…STFF), 95-117 (IFLY…SNTL), 137-156 (FFSE…VLHA), 232-254 (KVVN…TVAL), and 259-281 (GGLS…IFVV).

Its subcellular location is the cell membrane. This is an uncharacterized protein from Aquifex aeolicus (strain VF5).